Reading from the N-terminus, the 166-residue chain is UPF0304 protein VS_1049 (166 aa).

The protein belongs to the UPF0304 family.

In Vibrio atlanticus (strain LGP32) (Vibrio splendidus (strain Mel32)), this protein is UPF0304 protein VS_1049.